Reading from the N-terminus, the 502-residue chain is Polyadenylate-binding protein, cytoplasmic and nuclear (502 aa).

4 RRM domains span residues 14-90 (LTIY…KKDE), 96-176 (GNIF…LYNP), 191-275 (TNCF…KGQR), and 299-376 (KNLY…YFKN).

The protein belongs to the polyadenylate-binding protein type-1 family.

The protein localises to the cytoplasm. The protein resides in the nucleus. In terms of biological role, binds the poly(A) tail of mRNA. Appears to be an important mediator of the multiple roles of the poly(A) tail in mRNA biogenesis, stability and translation. This chain is Polyadenylate-binding protein, cytoplasmic and nuclear (PAB1), found in Encephalitozoon cuniculi (strain GB-M1) (Microsporidian parasite).